A 373-amino-acid chain; its full sequence is GDSL esterase/lipase LIP-4 (373 aa).

Positions 1 to 32 are cleaved as a signal peptide; the sequence is MATLFLYSNTFSFFFITLVSLALLILRQPSRA. The active-site Nucleophile is S47. An N-linked (GlcNAc...) asparagine glycan is attached at N93. Active-site residues include D339 and H342.

This sequence belongs to the 'GDSL' lipolytic enzyme family.

It localises to the secreted. This chain is GDSL esterase/lipase LIP-4 (LIP4), found in Arabidopsis thaliana (Mouse-ear cress).